Reading from the N-terminus, the 202-residue chain is GTP-binding protein rho1 (202 aa).

Residue 13–20 participates in GTP binding; it reads GDGACGKT. The Effector region signature appears at 35 to 43; it reads YVPTVFENY. GTP-binding positions include 60–64 and 118–121; these read DTAGQ and CKAD. Cys-199 is subject to Cysteine methyl ester. Cys-199 carries S-geranylgeranyl cysteine lipidation. A propeptide spans 200–202 (removed in mature form); it reads ILL.

This sequence belongs to the small GTPase superfamily. Rho family.

The protein resides in the cell membrane. Its function is as follows. Involved in the regulation of cell wall growth and actin cytoskeleton organization. Activates (1,3)-beta-D-glucan synthase. The sequence is that of GTP-binding protein rho1 (rho1) from Schizosaccharomyces pombe (strain 972 / ATCC 24843) (Fission yeast).